A 639-amino-acid chain; its full sequence is 1-deoxy-D-xylulose-5-phosphate synthase (639 aa).

Residues His79 and 120-122 (AHS) each bind thiamine diphosphate. A Mg(2+)-binding site is contributed by Asp151. Thiamine diphosphate-binding positions include 152–153 (GA), Asn180, Tyr289, and Glu371. A Mg(2+)-binding site is contributed by Asn180.

The protein belongs to the transketolase family. DXPS subfamily. As to quaternary structure, homodimer. It depends on Mg(2+) as a cofactor. Thiamine diphosphate serves as cofactor.

It catalyses the reaction D-glyceraldehyde 3-phosphate + pyruvate + H(+) = 1-deoxy-D-xylulose 5-phosphate + CO2. Its pathway is metabolic intermediate biosynthesis; 1-deoxy-D-xylulose 5-phosphate biosynthesis; 1-deoxy-D-xylulose 5-phosphate from D-glyceraldehyde 3-phosphate and pyruvate: step 1/1. Catalyzes the acyloin condensation reaction between C atoms 2 and 3 of pyruvate and glyceraldehyde 3-phosphate to yield 1-deoxy-D-xylulose-5-phosphate (DXP). The polypeptide is 1-deoxy-D-xylulose-5-phosphate synthase (Allorhizobium ampelinum (strain ATCC BAA-846 / DSM 112012 / S4) (Agrobacterium vitis (strain S4))).